A 236-amino-acid chain; its full sequence is Elastase-1 (236 aa).

The 236-residue stretch at 1-236 (VVGGRVAQPN…AYISWMNGIM (236 aa)) folds into the Peptidase S1 domain. A disulfide bond links cysteine 30 and cysteine 46. The Charge relay system role is filled by histidine 45. Ca(2+) contacts are provided by glutamate 59, asparagine 61, threonine 64, glutamate 66, and glutamate 69. Aspartate 93 (charge relay system) is an active-site residue. Intrachain disulfides connect cysteine 127-cysteine 193, cysteine 158-cysteine 174, and cysteine 183-cysteine 213. Serine 187 functions as the Charge relay system in the catalytic mechanism.

It belongs to the peptidase S1 family. Elastase subfamily. Requires Ca(2+) as cofactor. As to expression, pancreas.

The protein resides in the secreted. The catalysed reaction is Hydrolysis of proteins, including elastin. Preferential cleavage: Ala-|-Xaa.. Acts upon elastin. The polypeptide is Elastase-1 (Salmo salar (Atlantic salmon)).